Here is a 702-residue protein sequence, read N- to C-terminus: Protein sepa-1 (702 aa).

Positions 39 to 160 are required for self-association and interaction with pgl-3; the sequence is RQRFCYEKTD…KESTSYGQFR (122 aa). 3 consecutive short sequence motifs (LIR) follow at residues 107–110, 247–250, and 298–301; these read FVEV, FQKI, and FGFV. The interval 450 to 471 is disordered; sequence AKDPEEPTTAASEGGNTYGYQE. Residues 458–468 show a composition bias toward polar residues; that stretch reads TAASEGGNTYG. The LIR 4 motif lies at 469 to 472; it reads YQEL. Positions 508–543 form a coiled coil; it reads AAMDKKKKRRELKSRLNKINAQIDELEKRRMERAGK. Positions 545–564 are disordered; the sequence is QVVSSSVPSEEAAQVEAPAS. Residues 597–674 enclose the KIX domain; the sequence is NTSKEWIVED…TVDQILKKTL (78 aa). The span at 675-685 shows a compositional bias: basic and acidic residues; sequence KKDQRATEHNH. Positions 675–702 are disordered; the sequence is KKDQRATEHNHQQPTQSSDELAKNHEKN.

As to quaternary structure, self-associates. Interacts (via the LIR motifs) with lgg-1; the interaction is direct. Interacts (via the LIR motifs) with lgg-2; the interaction is direct. Interacts with pgl-3; interaction is enhanced in the presence of RNA. Interacts with epg-2; may be modulated by prmt-1. In terms of processing, degraded by autophagy.

The protein resides in the nucleus. Its subcellular location is the cytoplasm. The protein localises to the cytoplasmic granule. Adapter protein that connects P-granules in somatic cells with the autophagic machinery. Association with other adapters such as epg-2 and P-granule components such as pgl-3 is required for the accumulation and degradation of P-granules by autophagy in somatic cells. This ensures exclusive localization of the P-granules in germ cells. The protein is Protein sepa-1 of Caenorhabditis elegans.